Reading from the N-terminus, the 195-residue chain is Large ribosomal subunit protein uL5 (195 aa).

Belongs to the universal ribosomal protein uL5 family. In terms of assembly, part of the 50S ribosomal subunit; part of the 5S rRNA/L5/L18/L25 subcomplex. Contacts the 5S rRNA and the P site tRNA. Forms a bridge to the 30S subunit in the 70S ribosome.

Its function is as follows. This is one of the proteins that bind and probably mediate the attachment of the 5S RNA into the large ribosomal subunit, where it forms part of the central protuberance. In the 70S ribosome it contacts protein S13 of the 30S subunit (bridge B1b), connecting the 2 subunits; this bridge is implicated in subunit movement. Contacts the P site tRNA; the 5S rRNA and some of its associated proteins might help stabilize positioning of ribosome-bound tRNAs. This chain is Large ribosomal subunit protein uL5, found in Chlorobium chlorochromatii (strain CaD3).